A 159-amino-acid chain; its full sequence is Riboflavin kinase (159 aa).

38 to 43 (GLGEGR) contributes to the CDP binding site. Mg(2+) contacts are provided by Thr-67 and Asn-69. The FMN site is built by Thr-126 and Glu-134. 139–142 (HKLR) contacts CDP.

Belongs to the archaeal riboflavin kinase family. Mg(2+) is required as a cofactor.

It catalyses the reaction riboflavin + CTP = CDP + FMN + H(+). Its pathway is cofactor biosynthesis; FMN biosynthesis; FMN from riboflavin (CTP route): step 1/1. Its function is as follows. Catalyzes the CTP-dependent phosphorylation of riboflavin (vitamin B2) to form flavin mononucleotide (FMN). The sequence is that of Riboflavin kinase from Sulfolobus acidocaldarius (strain ATCC 33909 / DSM 639 / JCM 8929 / NBRC 15157 / NCIMB 11770).